The following is a 275-amino-acid chain: Uroporphyrinogen-III synthase (275 aa).

It belongs to the uroporphyrinogen-III synthase family.

The catalysed reaction is hydroxymethylbilane = uroporphyrinogen III + H2O. It functions in the pathway porphyrin-containing compound metabolism; protoporphyrin-IX biosynthesis; coproporphyrinogen-III from 5-aminolevulinate: step 3/4. Functionally, catalyzes cyclization of the linear tetrapyrrole, hydroxymethylbilane, to the macrocyclic uroporphyrinogen III, the fourth step in the heme biosynthetic pathway. This is Uroporphyrinogen-III synthase from Saccharomyces cerevisiae (strain ATCC 204508 / S288c) (Baker's yeast).